The sequence spans 211 residues: Protein-L-isoaspartate O-methyltransferase (211 aa).

Residue Ser60 is part of the active site.

It belongs to the methyltransferase superfamily. L-isoaspartyl/D-aspartyl protein methyltransferase family.

It is found in the cytoplasm. It catalyses the reaction [protein]-L-isoaspartate + S-adenosyl-L-methionine = [protein]-L-isoaspartate alpha-methyl ester + S-adenosyl-L-homocysteine. Its function is as follows. Catalyzes the methyl esterification of L-isoaspartyl residues in peptides and proteins that result from spontaneous decomposition of normal L-aspartyl and L-asparaginyl residues. It plays a role in the repair and/or degradation of damaged proteins. The chain is Protein-L-isoaspartate O-methyltransferase from Alteromonas mediterranea (strain DSM 17117 / CIP 110805 / LMG 28347 / Deep ecotype).